The sequence spans 416 residues: Argininosuccinate synthase (416 aa).

Residues Ala-11–Ser-19 and Ala-37 each bind ATP. Residue Tyr-88 participates in L-citrulline binding. A phosphotyrosine mark is found at Tyr-88 and Tyr-114. Residue Ala-116 to Asn-124 participates in ATP binding. L-aspartate is bound by residues Thr-120, Asn-124, and Asp-125. Asn-124 provides a ligand contact to L-citrulline. 5 residues coordinate L-citrulline: Arg-128, Ser-181, Ser-190, Glu-271, and Tyr-283. Ser-181 carries the post-translational modification Phosphoserine.

It belongs to the argininosuccinate synthase family. Homotetramer.

It localises to the cytoplasm. The protein localises to the cytosol. It catalyses the reaction L-citrulline + L-aspartate + ATP = 2-(N(omega)-L-arginino)succinate + AMP + diphosphate + H(+). The protein operates within amino-acid biosynthesis; L-arginine biosynthesis; L-arginine from L-ornithine and carbamoyl phosphate: step 2/3. It participates in nitrogen metabolism; urea cycle; (N(omega)-L-arginino)succinate from L-aspartate and L-citrulline: step 1/1. In terms of biological role, one of the enzymes of the urea cycle, the metabolic pathway transforming neurotoxic amonia produced by protein catabolism into inocuous urea in the liver of ureotelic animals. Catalyzes the formation of arginosuccinate from aspartate, citrulline and ATP and together with ASL it is responsible for the biosynthesis of arginine in most body tissues. This chain is Argininosuccinate synthase, found in Gallus gallus (Chicken).